Consider the following 386-residue polypeptide: Delta(7)-sterol 5(6)-desaturase ERG3 (386 aa).

Transmembrane regions (helical) follow at residues 120-140 (LSLFIITTIFGWLLYFIVAYL), 172-192 (IPVMVLLTIPFFLLELNGYSF), and 206-226 (AILWQIPKFILFTDCGIYFLH). The region spanning 214-337 (FILFTDCGIY…FTTLWDRLGN (124 aa)) is the Fatty acid hydroxylase domain. Residues 226 to 230 (HRWLH) carry the Histidine box-1 motif. Residues 239 to 243 (HKPHH) carry the Histidine box-2 motif. The helical transmembrane segment at 272-292 (PLLFPLHKVLYLFLFTFVNFW) threads the bilayer. The Histidine box-3 signature appears at 314–318 (HTVHH).

This sequence belongs to the sterol desaturase family. Requires Fe cation as cofactor.

The protein localises to the endoplasmic reticulum membrane. It carries out the reaction a Delta(7)-sterol + 2 Fe(II)-[cytochrome b5] + O2 + 2 H(+) = a Delta(5),Delta(7)-sterol + 2 Fe(III)-[cytochrome b5] + 2 H2O. Its pathway is steroid metabolism; ergosterol biosynthesis; ergosterol from zymosterol: step 3/5. C-5 sterol desaturase; part of the third module of ergosterol biosynthesis pathway that includes the late steps of the pathwa. ERG3 catalyzes the introduction of a C-5 double bond in the B ring to produce 5-dehydroepisterol. The third module or late pathway involves the ergosterol synthesis itself through consecutive reactions that mainly occur in the endoplasmic reticulum (ER) membrane. Firstly, the squalene synthase ERG9 catalyzes the condensation of 2 farnesyl pyrophosphate moieties to form squalene, which is the precursor of all steroids. Squalene synthase is crucial for balancing the incorporation of farnesyl diphosphate (FPP) into sterol and nonsterol isoprene synthesis. Secondly, the squalene epoxidase ERG1 catalyzes the stereospecific oxidation of squalene to (S)-2,3-epoxysqualene, which is considered to be a rate-limiting enzyme in steroid biosynthesis. Then, the lanosterol synthase ERG7 catalyzes the cyclization of (S)-2,3 oxidosqualene to lanosterol, a reaction that forms the sterol core. In the next steps, lanosterol is transformed to zymosterol through a complex process involving various demethylation, reduction and desaturation reactions. The lanosterol 14-alpha-demethylase ERG11 (also known as CYP51) catalyzes C14-demethylation of lanosterol to produce 4,4'-dimethyl cholesta-8,14,24-triene-3-beta-ol, which is critical for ergosterol biosynthesis. The C-14 reductase ERG24 reduces the C14=C15 double bond of 4,4-dimethyl-cholesta-8,14,24-trienol to produce 4,4-dimethyl-cholesta-8,24-dienol. 4,4-dimethyl-cholesta-8,24-dienol is substrate of the C-4 demethylation complex ERG25-ERG26-ERG27 in which ERG25 catalyzes the three-step monooxygenation required for the demethylation of 4,4-dimethyl and 4alpha-methylsterols, ERG26 catalyzes the oxidative decarboxylation that results in a reduction of the 3-beta-hydroxy group at the C-3 carbon to an oxo group, and ERG27 is responsible for the reduction of the keto group on the C-3. ERG28 has a role as a scaffold to help anchor ERG25, ERG26 and ERG27 to the endoplasmic reticulum and ERG29 regulates the activity of the iron-containing C4-methylsterol oxidase ERG25. Then, the sterol 24-C-methyltransferase ERG6 catalyzes the methyl transfer from S-adenosyl-methionine to the C-24 of zymosterol to form fecosterol. The C-8 sterol isomerase ERG2 catalyzes the reaction which results in unsaturation at C-7 in the B ring of sterols and thus converts fecosterol to episterol. The sterol-C5-desaturase ERG3 then catalyzes the introduction of a C-5 double bond in the B ring to produce 5-dehydroepisterol. The C-22 sterol desaturase ERG5 further converts 5-dehydroepisterol into ergosta-5,7,22,24(28)-tetraen-3beta-ol by forming the C-22(23) double bond in the sterol side chain. Finally, ergosta-5,7,22,24(28)-tetraen-3beta-ol is substrate of the C-24(28) sterol reductase ERG4 to produce ergosterol. The chain is Delta(7)-sterol 5(6)-desaturase ERG3 from Candida albicans (strain SC5314 / ATCC MYA-2876) (Yeast).